Here is a 402-residue protein sequence, read N- to C-terminus: MKIVDAKVIVTCPGRNFVTLKIVTDQGIYGIGDATLNGREKSVVSYLEDYLIPVLIGRDPQQIEDIWQFFYRGAYWRRGPVGMTALAAIDVALWDIKAKLANMPLYQLLGGKSRERILSYTHANGKDLDSTLEAVRKAKDKGYKAIRVQCGIPGIAKTYGVSTNTKSYEPADADLPSVEVWSTEKYLNYIPDVFAAVRKEFGPDIHLLHDVHHRLTPIEAARLGKALEPYHLFWMEDAVPAENQESFKLIRQHTTTPLAVGEVFNSIHDCRELIQNQWIDYIRTTIVHAGGISQMRRIADFASLFHVRTGFHGATDLSPVCMGAALHFDYWVPNFGIQEHMAHSEQMNAVFPHAYTFNDGYFTPGEKPGHGVDIDEKLAAQYPYKRACLPVNRLEDGTLWHW.

The substrate site is built by asparagine 37 and histidine 122. The Proton donor/acceptor role is filled by tyrosine 159. Residue aspartate 210 participates in Mg(2+) binding. Histidine 212 functions as the Proton donor/acceptor in the catalytic mechanism. 2 residues coordinate Mg(2+): glutamate 236 and glutamate 262. Positions 262, 283, 312, 316, and 339 each coordinate substrate.

Belongs to the mandelate racemase/muconate lactonizing enzyme family. GalD subfamily. Mg(2+) serves as cofactor.

It catalyses the reaction D-mannonate = 2-dehydro-3-deoxy-D-gluconate + H2O. Its function is as follows. Has low D-mannonate dehydratase activity (in vitro), suggesting that this is not a physiological substrate and that it has no significant role in D-mannonate degradation in vivo. Has no detectable activity with a panel of 70 other acid sugars (in vitro). The chain is D-galactonate dehydratase family member RspA (rspA) from Cellvibrio japonicus (strain Ueda107) (Pseudomonas fluorescens subsp. cellulosa).